Here is a 1502-residue protein sequence, read N- to C-terminus: DNA-directed RNA polymerase subunit beta' (1502 aa).

The Zn(2+) site is built by cysteine 60, cysteine 62, cysteine 75, and cysteine 78. The tract at residues 265–293 is disordered; it reads RKQRDLEDAEQLTGAERERKEYEASQERE. Positions 279–293 are enriched in basic and acidic residues; that stretch reads AERERKEYEASQERE. Mg(2+) contacts are provided by aspartate 626, aspartate 628, and aspartate 630. The Zn(2+) site is built by cysteine 1002, cysteine 1075, cysteine 1082, and cysteine 1085. The interval 1472–1502 is disordered; it reads SDDNGDEVGKNGEFADETPFTGDSDDRDNEI.

The protein belongs to the RNA polymerase beta' chain family. The RNAP catalytic core consists of 2 alpha, 1 beta, 1 beta' and 1 omega subunit. When a sigma factor is associated with the core the holoenzyme is formed, which can initiate transcription. Mg(2+) is required as a cofactor. Zn(2+) serves as cofactor.

It catalyses the reaction RNA(n) + a ribonucleoside 5'-triphosphate = RNA(n+1) + diphosphate. DNA-dependent RNA polymerase catalyzes the transcription of DNA into RNA using the four ribonucleoside triphosphates as substrates. This chain is DNA-directed RNA polymerase subunit beta', found in Roseiflexus castenholzii (strain DSM 13941 / HLO8).